The sequence spans 196 residues: Imidazoleglycerol-phosphate dehydratase (196 aa).

Belongs to the imidazoleglycerol-phosphate dehydratase family.

Its subcellular location is the cytoplasm. The enzyme catalyses D-erythro-1-(imidazol-4-yl)glycerol 3-phosphate = 3-(imidazol-4-yl)-2-oxopropyl phosphate + H2O. Its pathway is amino-acid biosynthesis; L-histidine biosynthesis; L-histidine from 5-phospho-alpha-D-ribose 1-diphosphate: step 6/9. This chain is Imidazoleglycerol-phosphate dehydratase, found in Ralstonia pickettii (strain 12J).